Here is a 159-residue protein sequence, read N- to C-terminus: Protransforming growth factor alpha (159 aa).

The N-terminal stretch at 1–23 (MVPATGQLALLALGILLAVCQAL) is a signal peptide. A propeptide spans 24–38 (ENSTSPLSDSPVAAA) (removed in mature form). Topologically, residues 24–97 (ENSTSPLSDS…AVVAASQKKQ (74 aa)) are extracellular. N25 is a glycosylation site (N-linked (GlcNAc...) asparagine). The EGF-like domain occupies 44–83 (NKCPDSHTQYCFHGTCRFLVQEEKPACVCHSGYVGVRCEH). 3 cysteine pairs are disulfide-bonded: C46/C59, C54/C70, and C72/C81. The propeptide at 89–159 (VVAASQKKQA…TACCHSETVV (71 aa)) is removed in mature form. Residues 98–123 (AITALVVVSIVALAVLIITCVLIHCC) traverse the membrane as a helical segment. Residues 124 to 159 (QLRKHCEWCRALVCRHEKPSALLKGRTACCHSETVV) are Cytoplasmic-facing. 2 S-palmitoyl cysteine lipidation sites follow: C152 and C153.

Interacts with the PDZ domains of SDCBP and SNTA1. The interaction with SDCBP, is required for the targeting to the cell surface. In the endoplasmic reticulum, in its immature form (i.e. with a prosegment and lacking full N-glycosylation), interacts with CNIH. In the Golgi apparatus, may form a complex with CNIH and GORASP2. Interacts (via cytoplasmic C-terminal domain) with NKD2. Interacts with MAGI3.

Its subcellular location is the secreted. The protein resides in the extracellular space. It is found in the cell membrane. TGF alpha is a mitogenic polypeptide that is able to bind to the EGF receptor/EGFR and to act synergistically with TGF beta to promote anchorage-independent cell proliferation in soft agar. This Mus musculus (Mouse) protein is Protransforming growth factor alpha (Tgfa).